The chain runs to 106 residues: Small ribosomal subunit protein uS10 (106 aa).

It belongs to the universal ribosomal protein uS10 family. As to quaternary structure, part of the 30S ribosomal subunit.

Involved in the binding of tRNA to the ribosomes. This chain is Small ribosomal subunit protein uS10, found in Mycoplasma genitalium (strain ATCC 33530 / DSM 19775 / NCTC 10195 / G37) (Mycoplasmoides genitalium).